Consider the following 348-residue polypeptide: Dihydroorotase (348 aa).

Zn(2+) contacts are provided by His-14 and His-16. Substrate-binding positions include 16–18 (HLR) and Asn-42. Zn(2+) is bound by residues Lys-100, His-137, and His-175. Lys-100 carries the post-translational modification N6-carboxylysine. His-137 is a binding site for substrate. Position 220 (Leu-220) interacts with substrate. Zn(2+) is bound at residue Asp-248. Asp-248 is an active-site residue. The substrate site is built by His-252 and Ala-264.

It belongs to the metallo-dependent hydrolases superfamily. DHOase family. Class II DHOase subfamily. In terms of assembly, homodimer. Zn(2+) serves as cofactor.

The catalysed reaction is (S)-dihydroorotate + H2O = N-carbamoyl-L-aspartate + H(+). The protein operates within pyrimidine metabolism; UMP biosynthesis via de novo pathway; (S)-dihydroorotate from bicarbonate: step 3/3. Catalyzes the reversible cyclization of carbamoyl aspartate to dihydroorotate. The protein is Dihydroorotase of Pseudomonas fluorescens (strain SBW25).